The following is a 735-amino-acid chain: Nuclear intron maturase 2, mitochondrial (735 aa).

A mitochondrion-targeting transit peptide spans 1–12 (MRRSFSVLGPYK). Residues 161–460 (RDKTDYESLS…KGIMFLDHVL (300 aa)) enclose the Reverse transcriptase domain. The tract at residues 485–653 (GTLLSVTASL…KFLIEYLTLD (169 aa)) is intron maturase type-2. The segment at 707 to 735 (SSTYNRDNDDQKNKEEDEDSEDGLRIARM) is disordered. Residues 712 to 721 (RDNDDQKNKE) show a composition bias toward basic and acidic residues.

The protein belongs to the plant nuclear intron maturase (nMat) family. In terms of assembly, associated to a large ribonucleoprotein complex in mitochondria containing group-II intron RNAs.

The protein localises to the mitochondrion. In terms of biological role, nuclear-encoded maturase required for splicing of group-II introns in mitochondria. Involved in the splicing of mitochondrial COX2, NAD1 and NAD7 transcripts. Necessary for mitochondrial biogenesis during early developmental stages. This Arabidopsis thaliana (Mouse-ear cress) protein is Nuclear intron maturase 2, mitochondrial.